The primary structure comprises 66 residues: Cold shock-like protein CspD (66 aa).

Residues 4-63 (GKVKWFNGEKGFGFIEVEGGEDVFVHFSAIQGDGFKTLEEGQEVSFEIVDGNRGPQAANV) enclose the CSD domain.

In terms of assembly, homodimer.

Its subcellular location is the cytoplasm. This chain is Cold shock-like protein CspD (cspD), found in Bacillus cereus.